Here is a 648-residue protein sequence, read N- to C-terminus: Primary amine oxidase (648 aa).

Residues 1 to 9 (MTLNAESEA) constitute a propeptide that is removed on maturation. 299–310 (AFDSGEYNIGNM) is a substrate binding site. D301 acts as the Proton acceptor in catalysis. A disulfide bridge links C320 with C346. 382–387 (VANYEY) contributes to the substrate binding site. Y385 functions as the Schiff-base intermediate with substrate; via topaquinone in the catalytic mechanism. Residue Y385 is modified to 2',4',5'-topaquinone. The Cu cation site is built by H436 and H438. Mn(2+) is bound by residues D445, F446, and D584. H595 contributes to the Cu cation binding site.

The protein belongs to the copper/topaquinone oxidase family. In terms of assembly, homodimer. It depends on Cu cation as a cofactor. Zn(2+) is required as a cofactor. The cofactor is L-topaquinone. Mn(2+) serves as cofactor. Topaquinone (TPQ) is generated by copper-dependent autoxidation of a specific tyrosyl residue.

The enzyme catalyses a primary methyl amine + O2 + H2O = an aldehyde + H2O2 + NH4(+). Functionally, the exact function of MaoXI is not known. The chain is Primary amine oxidase (maoI) from Arthrobacter sp. (strain P1).